The primary structure comprises 155 residues: uncharacterized protein (155 aa).

The region spanning 4–65 (IDEIDEIIVR…VVDTSFFGEF (62 aa)) is the HTH asnC-type domain. The segment at residues 23–42 (LTELGKKVGLTASAVKNRIE) is a DNA-binding region (H-T-H motif).

This is an uncharacterized protein from Pyrococcus abyssi (strain GE5 / Orsay).